The primary structure comprises 242 residues: MATVSMRDMLKAGVHFGHQTRYWNPKMKPFIFGARNKVHIINLEQTVPMFNEALAELAKIGSKKGKVLFVGTKRAASEAVKEAAINSDQFYVNNRWLGGMLTNYKTVRQSIKRLKDFEVQSQDGTFEKLTKKEALMRTRDMEKLEKSLGGIKNMNGLPDALFVIDADHEHIAIKEANNLGIPVFAVVDTNSNPDGVDYIIPGNDDAIRAIQLYLNAAADAVKSGRNQDVAAVAEKDGFVEAE.

Belongs to the universal ribosomal protein uS2 family.

This chain is Small ribosomal subunit protein uS2, found in Aliivibrio fischeri (strain ATCC 700601 / ES114) (Vibrio fischeri).